A 391-amino-acid polypeptide reads, in one-letter code: 8-amino-7-oxononanoate synthase (391 aa).

R20 contributes to the substrate binding site. 106–107 lines the pyridoxal 5'-phosphate pocket; it reads GY. H131 provides a ligand contact to substrate. Residues S178, H206, and T234 each contribute to the pyridoxal 5'-phosphate site. N6-(pyridoxal phosphate)lysine is present on K237. T353 is a binding site for substrate.

Belongs to the class-II pyridoxal-phosphate-dependent aminotransferase family. BioF subfamily. In terms of assembly, homodimer. The cofactor is pyridoxal 5'-phosphate.

The enzyme catalyses 6-carboxyhexanoyl-[ACP] + L-alanine + H(+) = (8S)-8-amino-7-oxononanoate + holo-[ACP] + CO2. The protein operates within cofactor biosynthesis; biotin biosynthesis. Catalyzes the decarboxylative condensation of pimeloyl-[acyl-carrier protein] and L-alanine to produce 8-amino-7-oxononanoate (AON), [acyl-carrier protein], and carbon dioxide. This is 8-amino-7-oxononanoate synthase from Trichlorobacter lovleyi (strain ATCC BAA-1151 / DSM 17278 / SZ) (Geobacter lovleyi).